The following is a 398-amino-acid chain: Glucose-1-phosphate adenylyltransferase (398 aa).

Residues Tyr-100, Gly-165, 180–181, and Ser-191 contribute to the alpha-D-glucose 1-phosphate site; that span reads EK.

It belongs to the bacterial/plant glucose-1-phosphate adenylyltransferase family. In terms of assembly, homotetramer.

It carries out the reaction alpha-D-glucose 1-phosphate + ATP + H(+) = ADP-alpha-D-glucose + diphosphate. It participates in glycan biosynthesis; glycogen biosynthesis. In terms of biological role, involved in the biosynthesis of ADP-glucose, a building block required for the elongation reactions to produce glycogen. Catalyzes the reaction between ATP and alpha-D-glucose 1-phosphate (G1P) to produce pyrophosphate and ADP-Glc. This is Glucose-1-phosphate adenylyltransferase from Desulfitobacterium hafniense (strain Y51).